The following is a 172-amino-acid chain: Nicotinamide-nucleotide adenylyltransferase (172 aa).

It belongs to the archaeal NMN adenylyltransferase family.

It localises to the cytoplasm. It catalyses the reaction beta-nicotinamide D-ribonucleotide + ATP + H(+) = diphosphate + NAD(+). It functions in the pathway cofactor biosynthesis; NAD(+) biosynthesis; NAD(+) from nicotinamide D-ribonucleotide: step 1/1. In Aeropyrum pernix (strain ATCC 700893 / DSM 11879 / JCM 9820 / NBRC 100138 / K1), this protein is Nicotinamide-nucleotide adenylyltransferase.